The primary structure comprises 322 residues: Cytochrome c biogenesis protein CcsA (322 aa).

The next 6 helical transmembrane spans lie at 9–29 (ILTH…LITL), 44–64 (GMIV…ASSG), 143–163 (MLLS…ILII), 226–246 (VISL…VWAN), 259–276 (ETWA…LHSR), and 289–309 (IASI…LLGI).

The protein belongs to the CcmF/CycK/Ccl1/NrfE/CcsA family. In terms of assembly, may interact with Ccs1.

Its subcellular location is the plastid. It is found in the chloroplast thylakoid membrane. Its function is as follows. Required during biogenesis of c-type cytochromes (cytochrome c6 and cytochrome f) at the step of heme attachment. The chain is Cytochrome c biogenesis protein CcsA from Triticum aestivum (Wheat).